The primary structure comprises 284 residues: Type II methyltransferase M1.LlaDCHI (284 aa).

The S-adenosyl-L-methionine site is built by tryptophan 17, lysine 21, aspartate 62, and aspartate 194.

Belongs to the N(4)/N(6)-methyltransferase family.

The catalysed reaction is a 2'-deoxyadenosine in DNA + S-adenosyl-L-methionine = an N(6)-methyl-2'-deoxyadenosine in DNA + S-adenosyl-L-homocysteine + H(+). Functionally, an alpha subtype methylase, recognizes the double-stranded sequence 5'-GATC-3', methylates A-2 on both strands, and protects the DNA from cleavage by the LlaDCHI endonuclease. The chain is Type II methyltransferase M1.LlaDCHI from Lactococcus lactis subsp. cremoris (Streptococcus cremoris).